We begin with the raw amino-acid sequence, 64 residues long: Large ribosomal subunit protein uL30 (64 aa).

It belongs to the universal ribosomal protein uL30 family. Part of the 50S ribosomal subunit.

This chain is Large ribosomal subunit protein uL30, found in Syntrophus aciditrophicus (strain SB).